The chain runs to 1624 residues: Latent-transforming growth factor beta-binding protein 4 (1624 aa).

A signal peptide spans 1 to 27; that stretch reads MPRPGTSGRRPLLLVLLLPLFAAATSA. A disordered region spans residues 125-146; the sequence is RRPRGPGGRGLLRRRPPQRAPA. The 33-residue stretch at 149–181 folds into the EGF-like 1 domain; it reads APVLCPLICHNGGVCVKPDRCLCPPDFAGKFCQ. Cystine bridges form between Cys153-Cys163, Cys157-Cys169, Cys171-Cys180, Cys289-Cys311, Cys298-Cys324, and Cys312-Cys327. Residues 287–339 enclose the TB 1 domain; that stretch reads GYCFRELRGGECASPLPGLRTQEVCCRGAGLAWGVHDCQLCSERLGNSERVSA. The N-linked (GlcNAc...) asparagine glycan is linked to Asn352. Residues 357–397 enclose the EGF-like 2; calcium-binding domain; the sequence is DVDECATGGRCQHGECANTRGGYTCVCPDGFLLDSSRSSCI. Disulfide bonds link Cys361-Cys372, Cys367-Cys381, Cys383-Cys396, Cys409-Cys431, Cys418-Cys444, Cys432-Cys447, and Cys433-Cys459. In terms of domain architecture, TB 2 spans 407–459; it reads GPCFRVLRDGGCSLPILRNITKQICCCSRVGKAWGRGCQLCPPFGSEGFREIC. Asn425 is a glycosylation site (N-linked (GlcNAc...) asparagine). The disordered stretch occupies residues 474-546; the sequence is YNTRPLGQEP…PEIPESGPSS (73 aa). A compositionally biased stretch (polar residues) spans 487 to 500; the sequence is SLSQPRTLPATSRP. A compositionally biased stretch (basic and acidic residues) spans 508–522; sequence HRLEPRPEPRPDPRP. Residues 545–586 form the EGF-like 3 domain; sequence SSGMCQRNPQVCGPGRCISRPSGYTCACDSGFRLSPQGTRCI. 30 disulfide bridges follow: Cys549-Cys561, Cys556-Cys570, Cys572-Cys585, Cys591-Cys603, Cys598-Cys612, Cys614-Cys627, Cys633-Cys645, Cys640-Cys654, Cys656-Cys669, Cys675-Cys687, Cys682-Cys696, Cys698-Cys707, Cys714-Cys726, Cys721-Cys735, Cys737-Cys750, Cys756-Cys768, Cys763-Cys777, Cys779-Cys792, Cys838-Cys851, Cys845-Cys860, Cys862-Cys876, Cys882-Cys894, Cys888-Cys903, Cys905-Cys918, Cys924-Cys935, Cys930-Cys944, Cys946-Cys959, Cys1053-Cys1065, Cys1059-Cys1074, and Cys1076-Cys1089. In terms of domain architecture, EGF-like 4; calcium-binding spans 587-628; that stretch reads DVDECRRVPPPCAPGRCENSPGSFRCVCGPGFRAGPRAAECL. The region spanning 629–670 is the EGF-like 5; calcium-binding domain; that stretch reads DVDECHRVPPPCDLGRCENTPGSFLCVCPAGYQAAPHGASCQ. In terms of domain architecture, EGF-like 6; calcium-binding spans 671–708; that stretch reads DVDECTQSPGLCGRGACKNLPGSFRCVCPAGFRGSACE. Residues 710–751 enclose the EGF-like 7; calcium-binding domain; it reads DVDECAQEPPPCGPGRCDNTAGSFHCACPAGFRSRGPGAPCQ. Positions 752-793 constitute an EGF-like 8; calcium-binding domain; sequence DVDECARSPPPCTYGRCENTEGSFQCVCPMGFQPNTAGSECE. Residues 834–877 enclose the EGF-like 9; calcium-binding domain; sequence DVDECSSGAPPCGPHGHCTNTEGSFRCSCAPGYRAPSGRPGPCA. Residues 878 to 919 enclose the EGF-like 10; calcium-binding domain; the sequence is DVNECLEGDFCFPHGECLNTDGSFACTCAPGYRPGPRGASCL. One can recognise an EGF-like 11; calcium-binding domain in the interval 920–960; sequence DVDECSEEDLCQSGICTNTDGSFECICPPGHRAGPDLASCL. The EGF-like 12; calcium-binding domain occupies 1049-1090; that stretch reads DVDECRNRSFCGAHAVCQNLPGSFQCLCDQGYEGARDGRHCV. Asn1055 carries N-linked (GlcNAc...) asparagine glycosylation. The tract at residues 1130–1179 is disordered; sequence GRCVPPRTSAGTFPGSQPQAPASPVLPARPPPPPLPRRPSTPRQGPVGSG. Residues 1138–1149 are compositionally biased toward polar residues; the sequence is SAGTFPGSQPQA. Positions 1156-1168 are enriched in pro residues; it reads PARPPPPPLPRRP. The TB 3 domain occupies 1181–1235; it reads RECYFDTAAPDACDNILARNVTWQECCCTVGEGWGSGCRIQQCPGTETAEYQSLC. 10 cysteine pairs are disulfide-bonded: Cys1183–Cys1206, Cys1193–Cys1218, Cys1207–Cys1223, Cys1208–Cys1235, Cys1257–Cys1270, Cys1265–Cys1279, Cys1281–Cys1294, Cys1300–Cys1312, Cys1307–Cys1321, and Cys1323–Cys1336. The N-linked (GlcNAc...) asparagine glycan is linked to Asn1200. Residues 1253–1295 form the EGF-like 13; calcium-binding domain; the sequence is DVDECQLFRDQVCKSGVCVNTAPGYSCYCSNGYYYHTQRLECI. An EGF-like 14; calcium-binding domain is found at 1296 to 1337; the sequence is DNDECADEEPACEGGRCVNTVGSYHCTCEPPLVLDGSQRRCV. A glycan (N-linked (GlcNAc...) asparagine) is linked at Asn1339. Residues 1349–1402 enclose the TB 4 domain; sequence GVCWQEVGADLVCSHPRLDRQATYTECCCLYGEAWGMDCALCPAQDSDDFEALC. 4 disulfides stabilise this stretch: Cys1351–Cys1375, Cys1361–Cys1387, Cys1376–Cys1390, and Cys1377–Cys1402. The span at 1446-1458 shows a compositional bias: pro residues; it reads ALPYDPYPPPPGP. A disordered region spans residues 1446–1524; sequence ALPYDPYPPP…PPEGGSYAGS (79 aa). Positions 1501-1510 are enriched in basic and acidic residues; that stretch reads RSRDTRRSFP. 2 consecutive EGF-like domains span residues 1533-1573 and 1574-1618; these read EAEE…MACV and DINE…HHCA. Disulfide bonds link Cys1537–Cys1548, Cys1543–Cys1557, Cys1559–Cys1572, Cys1578–Cys1593, Cys1588–Cys1602, and Cys1604–Cys1617.

The protein belongs to the LTBP family. In terms of assembly, forms part of the large latent transforming growth factor beta precursor complex; removal is essential for activation of complex. Interacts with LTBP1 and TGFB1. Interacts with EFEMP2; this interaction promotes fibrillar deposition of EFEMP2. In terms of processing, contains hydroxylated asparagine residues. In terms of tissue distribution, highly expressed in heart, skeletal muscle, pancreas, uterus, and small intestine. Weakly expressed in placenta and lung.

It localises to the secreted. Its subcellular location is the extracellular space. It is found in the extracellular matrix. Key regulator of transforming growth factor beta (TGFB1, TGFB2 and TGFB3) that controls TGF-beta activation by maintaining it in a latent state during storage in extracellular space. Associates specifically via disulfide bonds with the Latency-associated peptide (LAP), which is the regulatory chain of TGF-beta, and regulates integrin-dependent activation of TGF-beta. This chain is Latent-transforming growth factor beta-binding protein 4 (LTBP4), found in Homo sapiens (Human).